Reading from the N-terminus, the 343-residue chain is S-adenosylmethionine:tRNA ribosyltransferase-isomerase (343 aa).

Belongs to the QueA family. In terms of assembly, monomer.

It is found in the cytoplasm. The enzyme catalyses 7-aminomethyl-7-carbaguanosine(34) in tRNA + S-adenosyl-L-methionine = epoxyqueuosine(34) in tRNA + adenine + L-methionine + 2 H(+). Its pathway is tRNA modification; tRNA-queuosine biosynthesis. Functionally, transfers and isomerizes the ribose moiety from AdoMet to the 7-aminomethyl group of 7-deazaguanine (preQ1-tRNA) to give epoxyqueuosine (oQ-tRNA). This is S-adenosylmethionine:tRNA ribosyltransferase-isomerase from Dehalococcoides mccartyi (strain ATCC BAA-2100 / JCM 16839 / KCTC 5957 / BAV1).